The following is a 468-amino-acid chain: Methionine aminopeptidase 2 (468 aa).

Over residues 1–10 (MGSKTFEGEG) the composition is skewed to basic and acidic residues. Residues 1 to 106 (MGSKTFEGEG…PPRVPLDDLF (106 aa)) are disordered. The span at 16–25 (DPSNSTSPNS) shows a compositional bias: polar residues. The span at 31–40 (RGAHLSRDGD) shows a compositional bias: basic and acidic residues. Residues 46-56 (GDGDDGADGDE) show a composition bias toward acidic residues. The segment covering 61 to 75 (VTTTPLTEQQPSSET) has biased composition (polar residues). Residues 78–90 (KKKKRRKPKKKIS) are compositionally biased toward basic residues. Residue histidine 219 participates in substrate binding. Residues aspartate 240, aspartate 251, and histidine 320 each contribute to the a divalent metal cation site. Substrate is bound at residue histidine 328. Glutamate 353 and glutamate 449 together coordinate a divalent metal cation.

This sequence belongs to the peptidase M24A family. Methionine aminopeptidase eukaryotic type 2 subfamily. It depends on Co(2+) as a cofactor. Requires Zn(2+) as cofactor. Mn(2+) is required as a cofactor. The cofactor is Fe(2+).

It is found in the cytoplasm. It catalyses the reaction Release of N-terminal amino acids, preferentially methionine, from peptides and arylamides.. Its function is as follows. Cotranslationally removes the N-terminal methionine from nascent proteins. The N-terminal methionine is often cleaved when the second residue in the primary sequence is small and uncharged (Met-Ala-, Cys, Gly, Pro, Ser, Thr, or Val). The polypeptide is Methionine aminopeptidase 2 (Aspergillus oryzae (strain ATCC 42149 / RIB 40) (Yellow koji mold)).